The chain runs to 385 residues: Trehalose-phosphate phosphatase A (385 aa).

A disordered region spans residues 1–21 (MDMKSGHSSPVMTDSPPISNS).

It belongs to the trehalose phosphatase family. A divalent metal cation serves as cofactor. As to expression, expressed in flowers.

The catalysed reaction is alpha,alpha-trehalose 6-phosphate + H2O = alpha,alpha-trehalose + phosphate. Its pathway is glycan biosynthesis; trehalose biosynthesis. Functionally, removes the phosphate from trehalose 6-phosphate to produce free trehalose. Trehalose accumulation in plant may improve abiotic stress tolerance. This chain is Trehalose-phosphate phosphatase A (TPPA), found in Arabidopsis thaliana (Mouse-ear cress).